The chain runs to 698 residues: DNA-directed RNA polymerase subunit beta' (698 aa).

4 residues coordinate Zn(2+): cysteine 69, cysteine 71, cysteine 89, and cysteine 92. Aspartate 509, aspartate 511, and aspartate 513 together coordinate Mg(2+).

The protein belongs to the RNA polymerase beta' chain family. RpoC1 subfamily. In terms of assembly, in plastids the minimal PEP RNA polymerase catalytic core is composed of four subunits: alpha, beta, beta', and beta''. When a (nuclear-encoded) sigma factor is associated with the core the holoenzyme is formed, which can initiate transcription. Mg(2+) is required as a cofactor. It depends on Zn(2+) as a cofactor.

The protein localises to the plastid. The protein resides in the chloroplast. The enzyme catalyses RNA(n) + a ribonucleoside 5'-triphosphate = RNA(n+1) + diphosphate. Its function is as follows. DNA-dependent RNA polymerase catalyzes the transcription of DNA into RNA using the four ribonucleoside triphosphates as substrates. The polypeptide is DNA-directed RNA polymerase subunit beta' (Cryptomeria japonica (Japanese cedar)).